A 312-amino-acid polypeptide reads, in one-letter code: HPr kinase/phosphorylase (312 aa).

Residues His139 and Lys160 contribute to the active site. 154–161 (GSSGVGKS) contacts ATP. Ser161 serves as a coordination point for Mg(2+). Asp178 (proton acceptor; for phosphorylation activity. Proton donor; for dephosphorylation activity) is an active-site residue. The important for the catalytic mechanism of both phosphorylation and dephosphorylation stretch occupies residues 202-211 (LEIRGLGIIN). Glu203 contributes to the Mg(2+) binding site. Residue Arg244 is part of the active site. The important for the catalytic mechanism of dephosphorylation stretch occupies residues 265 to 270 (PVRPGR).

Belongs to the HPrK/P family. In terms of assembly, homohexamer. The cofactor is Mg(2+).

The catalysed reaction is [HPr protein]-L-serine + ATP = [HPr protein]-O-phospho-L-serine + ADP + H(+). The enzyme catalyses [HPr protein]-O-phospho-L-serine + phosphate + H(+) = [HPr protein]-L-serine + diphosphate. Its function is as follows. Catalyzes the ATP- as well as the pyrophosphate-dependent phosphorylation of a specific serine residue in HPr, a phosphocarrier protein of the phosphoenolpyruvate-dependent sugar phosphotransferase system (PTS). HprK/P also catalyzes the pyrophosphate-producing, inorganic phosphate-dependent dephosphorylation (phosphorolysis) of seryl-phosphorylated HPr (P-Ser-HPr). The two antagonistic activities of HprK/P are regulated by several intracellular metabolites, which change their concentration in response to the absence or presence of rapidly metabolisable carbon sources (glucose, fructose, etc.) in the growth medium. Therefore, by controlling the phosphorylation state of HPr, HPrK/P is a sensor enzyme that plays a major role in the regulation of carbon metabolism and sugar transport: it mediates carbon catabolite repression (CCR), and regulates PTS-catalyzed carbohydrate uptake and inducer exclusion. The sequence is that of HPr kinase/phosphorylase from Listeria welshimeri serovar 6b (strain ATCC 35897 / DSM 20650 / CCUG 15529 / CIP 8149 / NCTC 11857 / SLCC 5334 / V8).